Consider the following 223-residue polypeptide: Protein Mis18-alpha (223 aa).

A disordered region spans residues 1-30; the sequence is MAGTFSLEPCSTSSSCNHQGKRSESSLLEK. A compositionally biased stretch (polar residues) spans 9 to 18; the sequence is PCSTSSSCNH. Over residues 21 to 30 the composition is skewed to basic and acidic residues; it reads KRSESSLLEK. 3 positions are modified to phosphoserine: Ser-33, Ser-36, and Ser-37. Residues 71–169 form the Mis18 domain; it reads PLVFLCTRCR…SVEAVESYTL (99 aa). Zn(2+) contacts are provided by Cys-76, Cys-79, Cys-132, and Cys-135. Residue Lys-153 forms a Glycyl lysine isopeptide (Lys-Gly) (interchain with G-Cter in SUMO2) linkage. Phosphoserine is present on Ser-223.

This sequence belongs to the mis18 family. In terms of assembly, homodimer, and heterodimer with OIP5/MIS18B. Identified in a complex containing MIS18A, OIP5/MIS18B, MIS18BP1, RBBP7 and RBBP4.

Its subcellular location is the nucleus. It localises to the chromosome. It is found in the centromere. Functionally, required for recruitment of CENPA to centromeres and normal chromosome segregation during mitosis. This Rattus norvegicus (Rat) protein is Protein Mis18-alpha (Mis18a).